The sequence spans 888 residues: Phosphoenolpyruvate carboxylase (888 aa).

Active-site residues include His-144 and Lys-553.

The protein belongs to the PEPCase type 1 family. Requires Mg(2+) as cofactor.

It carries out the reaction oxaloacetate + phosphate = phosphoenolpyruvate + hydrogencarbonate. Forms oxaloacetate, a four-carbon dicarboxylic acid source for the tricarboxylic acid cycle. This is Phosphoenolpyruvate carboxylase from Alcanivorax borkumensis (strain ATCC 700651 / DSM 11573 / NCIMB 13689 / SK2).